A 191-amino-acid polypeptide reads, in one-letter code: Mating-type-like protein ALPHA1 (191 aa).

The segment at residues 118–174 is a DNA-binding region (alpha box); that stretch reads SKKRPMNAFMAFRTYYAQLGTGLKQNTLSVILSEAWNAPETDQNIWDIFAQQFNFAS.

Belongs to the MATALPHA1 family.

It is found in the nucleus. Functionally, mating type proteins are sequence specific DNA-binding proteins that act as master switches in yeast differentiation by controlling gene expression in a cell type-specific fashion. Transcriptional activator that induces the transcription of alpha-specific genes. This Candida glabrata (strain ATCC 2001 / BCRC 20586 / JCM 3761 / NBRC 0622 / NRRL Y-65 / CBS 138) (Yeast) protein is Mating-type-like protein ALPHA1 (MTL1ALPHA1).